A 104-amino-acid chain; its full sequence is Type VII secretion system extracellular protein B (104 aa).

The protein belongs to the WXG100 family. Homodimer. When mixed with EsxA does not form heterodimers. Forms heterodimers with EsxD.

It is found in the secreted. Its function is as follows. Virulence factor that is important for the establishment of infection in the host. EsxB is required for EsxA synthesis as well as secretion. Mediates together with EsxA the release of S.aureus from the host cell. Also inhibits host cytokine production and thus modulates dendritic cell-mediated immunity. The chain is Type VII secretion system extracellular protein B from Staphylococcus aureus (strain USA300).